Here is a 953-residue protein sequence, read N- to C-terminus: Communesin biosynthesis cluster-specific transcription factor cnsN (953 aa).

A disordered region spans residues 371-418; it reads ELESTSPRTSHSSLSQDDTASLHSRSSLSSSPGRFPPSQKLVATSDSP. The segment covering 374 to 408 has biased composition (low complexity); sequence STSPRTSHSSLSQDDTASLHSRSSLSSSPGRFPPS.

Its subcellular location is the nucleus. Functionally, transcriptional regulator; part of the gene cluster that mediates the biosynthesis of communesins, a prominent class of indole alkaloids with great potential as pharmaceuticals. The chain is Communesin biosynthesis cluster-specific transcription factor cnsN from Penicillium expansum (Blue mold rot fungus).